The primary structure comprises 96 residues: UPF0235 protein VIBHAR_03581 (96 aa).

This sequence belongs to the UPF0235 family.

This is UPF0235 protein VIBHAR_03581 from Vibrio campbellii (strain ATCC BAA-1116).